Here is a 579-residue protein sequence, read N- to C-terminus: Protein inscuteable homolog (579 aa).

The important for interaction with GPSM2 stretch occupies residues 74–89; that stretch reads SVQRWMEDLKLMTECE. A PDZ-binding motif is present at residues 576 to 579; the sequence is ESFV.

In terms of assembly, interacts with ALS2CR19/PAR3B and GPSM1/AGS3. Interacts with F2RL2/PAR3. Interacts with GPSM2/LGN (via TPR repeat region). In terms of tissue distribution, expressed in brain, kidney, liver, testis and skin.

It is found in the cytoplasm. It localises to the cell cortex. In terms of biological role, may function as an adapter linking the Par3 complex to the GPSM1/GPSM2 complex. Involved in spindle orientation during mitosis. May regulate cell proliferation and differentiation in the developing nervous system. May play a role in the asymmetric division of fibroblasts and participate in the process of stratification of the squamous epithelium. This is Protein inscuteable homolog (Insc) from Mus musculus (Mouse).